A 449-amino-acid polypeptide reads, in one-letter code: UDP-N-acetylmuramoylalanine--D-glutamate ligase (449 aa).

118–124 (GTNGKTT) is a binding site for ATP.

Belongs to the MurCDEF family.

It localises to the cytoplasm. It carries out the reaction UDP-N-acetyl-alpha-D-muramoyl-L-alanine + D-glutamate + ATP = UDP-N-acetyl-alpha-D-muramoyl-L-alanyl-D-glutamate + ADP + phosphate + H(+). It participates in cell wall biogenesis; peptidoglycan biosynthesis. Functionally, cell wall formation. Catalyzes the addition of glutamate to the nucleotide precursor UDP-N-acetylmuramoyl-L-alanine (UMA). The protein is UDP-N-acetylmuramoylalanine--D-glutamate ligase of Staphylococcus epidermidis (strain ATCC 35984 / DSM 28319 / BCRC 17069 / CCUG 31568 / BM 3577 / RP62A).